The following is a 369-amino-acid chain: Phosphate-binding protein PstS 3 (369 aa).

Residues 1–21 form the signal peptide; sequence MKLNQFGAAIGLLATGALLSG. A lipid anchor (N-palmitoyl cysteine) is attached at C22. The S-diacylglycerol cysteine moiety is linked to residue C22. Phosphate is bound by residues 55–57, S85, D103, and 190–192; these read STA and SGT.

The protein belongs to the PstS family. In terms of assembly, the complex is composed of two ATP-binding proteins (PstB), two transmembrane proteins (PstC and PstA) and a solute-binding protein (PstS).

It is found in the cell membrane. Its function is as follows. Part of the ABC transporter complex PstSACB involved in phosphate import. This is Phosphate-binding protein PstS 3 (pstS2) from Mycobacterium leprae (strain TN).